The chain runs to 332 residues: Glyceraldehyde-3-phosphate dehydrogenase (332 aa).

Residues 12-13 (RI), aspartate 34, lysine 78, and threonine 120 each bind NAD(+). Residues 149 to 151 (SCT), threonine 180, 209 to 210 (TG), and arginine 232 contribute to the D-glyceraldehyde 3-phosphate site. Cysteine 150 acts as the Nucleophile in catalysis. NAD(+) is bound at residue asparagine 314.

The protein belongs to the glyceraldehyde-3-phosphate dehydrogenase family. In terms of assembly, homotetramer.

It is found in the cytoplasm. It catalyses the reaction D-glyceraldehyde 3-phosphate + phosphate + NAD(+) = (2R)-3-phospho-glyceroyl phosphate + NADH + H(+). The protein operates within carbohydrate degradation; glycolysis; pyruvate from D-glyceraldehyde 3-phosphate: step 1/5. In terms of biological role, catalyzes the oxidative phosphorylation of glyceraldehyde 3-phosphate (G3P) to 1,3-bisphosphoglycerate (BPG) using the cofactor NAD. The first reaction step involves the formation of a hemiacetal intermediate between G3P and a cysteine residue, and this hemiacetal intermediate is then oxidized to a thioester, with concomitant reduction of NAD to NADH. The reduced NADH is then exchanged with the second NAD, and the thioester is attacked by a nucleophilic inorganic phosphate to produce BPG. This chain is Glyceraldehyde-3-phosphate dehydrogenase (gapA), found in Buchnera aphidicola subsp. Schizaphis graminum (strain Sg).